The primary structure comprises 493 residues: Insulinoma-associated protein 2 (493 aa).

Over residues 1 to 12 the composition is skewed to basic residues; sequence MPRGFLVKRTKR. The segment at 1 to 20 is SNAG domain; sequence MPRGFLVKRTKRSGSSYRAR. The tract at residues 1-77 is disordered; sequence MPRGFLVKRT…PGPSPARPAG (77 aa). The C2H2-type 1; atypical zinc finger occupies 203-223; the sequence is FICQLCKHQYADPFALAQHRC. Residues 231–253 form a C2H2-type 2 zinc finger; that stretch reads YRCPECDKVFSCPANLASHRRWH. The segment at 248–310 is disordered; the sequence is SHRRWHKPRP…SGDGQHRDSA (63 aa). Residues 267–276 are compositionally biased toward pro residues; sequence PHAPLTPPDP. A compositionally biased stretch (basic and acidic residues) spans 283–294; it reads ENGRVPRTDDQH. C2H2-type zinc fingers lie at residues 354 to 376, 398 to 420, and 452 to 475; these read FVCPYCHKKFRRQAYLRKHLGTH, FACPLCGAHFPSADIREKHRLWH, and FSCKYCPSTFFSSPGLTRHINKCH.

As to expression, expressed in spleen, stomach, liver, kidney and testis. In the pancreas, expressed in islet cells, including insulin-producing beta-cells, but not in acinar cells (at protein level). In the brain, expressed in the neuronal cells of the cerebral cortex, the Purkinje cells of the cerebellum and the hippocampal region including CA1 and CA3 (at protein level).

Its subcellular location is the cytoplasm. The protein localises to the nucleus. Its function is as follows. May function as a growth suppressor or tumor suppressor in liver cells and in certain neurons. In Mus musculus (Mouse), this protein is Insulinoma-associated protein 2 (Insm2).